The primary structure comprises 440 residues: Adenylosuccinate synthetase (440 aa).

GTP is bound by residues 13 to 19 (GDEGKGK) and 41 to 43 (GHT). Asp14 (proton acceptor) is an active-site residue. 2 residues coordinate Mg(2+): Asp14 and Gly41. Residues 14 to 17 (DEGK), 39 to 42 (NAGH), Thr135, Arg149, Gln230, Thr245, and Arg313 contribute to the IMP site. Catalysis depends on His42, which acts as the Proton donor. 309–315 (TVTKRKR) provides a ligand contact to substrate. Residues Arg315, 341 to 343 (KLD), and 423 to 425 (STG) contribute to the GTP site.

It belongs to the adenylosuccinate synthetase family. In terms of assembly, homodimer. The cofactor is Mg(2+).

The protein localises to the cytoplasm. It catalyses the reaction IMP + L-aspartate + GTP = N(6)-(1,2-dicarboxyethyl)-AMP + GDP + phosphate + 2 H(+). It functions in the pathway purine metabolism; AMP biosynthesis via de novo pathway; AMP from IMP: step 1/2. Functionally, plays an important role in the de novo pathway of purine nucleotide biosynthesis. Catalyzes the first committed step in the biosynthesis of AMP from IMP. The sequence is that of Adenylosuccinate synthetase from Methylobacillus flagellatus (strain ATCC 51484 / DSM 6875 / VKM B-1610 / KT).